The following is a 404-amino-acid chain: Glycosylated lysosomal membrane protein (404 aa).

The first 35 residues, 1–35, serve as a signal peptide directing secretion; the sequence is MRGSVERGWGWGHCASSPLLLWTLLLFAAPFGLLG. At 36–371 the chain is on the lumenal side; the sequence is EKTRQLSLEV…GRLVPTSPGH (336 aa). Residues N65, N134, N159, N186, and N229 are each glycosylated (N-linked (GlcNAc...) asparagine). Residues 372–392 traverse the membrane as a helical segment; it reads HGSALGAPGLMLLGGGLVLLL. Residues 393-404 lie on the Cytoplasmic side of the membrane; sequence HHRKYSEYQSIN. Positions 400–404 match the Lysosomal targeting motif motif; the sequence is YQSIN.

The protein belongs to the GLMP family. As to quaternary structure, interacts (via lumenal domain) with lysosomal protein MFSD1; the interaction starts while both proteins are still in the endoplasmic reticulum and is required for stabilization of MFSD1 in lysosomes but has no direct effect on its targeting to lysosomes or transporter activity. In terms of processing, highly N-glycosylated. N-glycosylation is essential for GLMP stability and for MFSD1 lysosomal localization.

Its subcellular location is the lysosome membrane. Its function is as follows. Required to protect lysosomal transporter MFSD1 from lysosomal proteolysis and for MFSD1 lysosomal localization. This chain is Glycosylated lysosomal membrane protein, found in Pongo abelii (Sumatran orangutan).